Consider the following 88-residue polypeptide: Large ribosomal subunit protein bL27 (88 aa).

This sequence belongs to the bacterial ribosomal protein bL27 family.

The sequence is that of Large ribosomal subunit protein bL27 from Acidobacterium capsulatum (strain ATCC 51196 / DSM 11244 / BCRC 80197 / JCM 7670 / NBRC 15755 / NCIMB 13165 / 161).